The following is a 668-amino-acid chain: L-type lectin-domain containing receptor kinase I.7 (668 aa).

An N-terminal signal peptide occupies residues M1–Q21. Topologically, residues Q22 to P285 are extracellular. A legume-lectin like region spans residues T24 to S256. Residues N56, N125, N167, N201, and N223 are each glycosylated (N-linked (GlcNAc...) asparagine). Residues V286–Y306 form a helical membrane-spanning segment. Residues L307–R668 are Cytoplasmic-facing. Residues F341 to F620 form the Protein kinase domain. Residues L347–V355 and K372 contribute to the ATP site. Catalysis depends on D468, which acts as the Proton acceptor.

In the C-terminal section; belongs to the protein kinase superfamily. Ser/Thr protein kinase family. It in the N-terminal section; belongs to the leguminous lectin family.

It localises to the cell membrane. The enzyme catalyses L-seryl-[protein] + ATP = O-phospho-L-seryl-[protein] + ADP + H(+). The catalysed reaction is L-threonyl-[protein] + ATP = O-phospho-L-threonyl-[protein] + ADP + H(+). Functionally, involved in resistance response to the pathogenic oomycetes Phytophthora infestans and Phytophthora capsici. The polypeptide is L-type lectin-domain containing receptor kinase I.7 (Arabidopsis thaliana (Mouse-ear cress)).